The sequence spans 101 residues: Small ribosomal subunit protein uS14 (101 aa).

The tract at residues 52-72 is disordered; sequence PRDSSPVRQRRRCRSTGRPRG. The span at 59-72 shows a compositional bias: basic residues; that stretch reads RQRRRCRSTGRPRG.

This sequence belongs to the universal ribosomal protein uS14 family. Part of the 30S ribosomal subunit. Contacts proteins S3 and S10.

Its function is as follows. Binds 16S rRNA, required for the assembly of 30S particles and may also be responsible for determining the conformation of the 16S rRNA at the A site. In Nitrosococcus oceani (strain ATCC 19707 / BCRC 17464 / JCM 30415 / NCIMB 11848 / C-107), this protein is Small ribosomal subunit protein uS14.